Consider the following 331-residue polypeptide: Glycerol-3-phosphate dehydrogenase [NAD(P)+] (331 aa).

NADPH-binding residues include S11, F12, R32, and K106. 3 residues coordinate sn-glycerol 3-phosphate: K106, G134, and S136. A138 provides a ligand contact to NADPH. Positions 189, 242, 252, 253, and 254 each coordinate sn-glycerol 3-phosphate. K189 (proton acceptor) is an active-site residue. Residue R253 coordinates NADPH. Residues V277 and E279 each contribute to the NADPH site.

The protein belongs to the NAD-dependent glycerol-3-phosphate dehydrogenase family.

The protein localises to the cytoplasm. The catalysed reaction is sn-glycerol 3-phosphate + NAD(+) = dihydroxyacetone phosphate + NADH + H(+). The enzyme catalyses sn-glycerol 3-phosphate + NADP(+) = dihydroxyacetone phosphate + NADPH + H(+). It participates in membrane lipid metabolism; glycerophospholipid metabolism. Its function is as follows. Catalyzes the reduction of the glycolytic intermediate dihydroxyacetone phosphate (DHAP) to sn-glycerol 3-phosphate (G3P), the key precursor for phospholipid synthesis. This is Glycerol-3-phosphate dehydrogenase [NAD(P)+] from Clostridium perfringens (strain ATCC 13124 / DSM 756 / JCM 1290 / NCIMB 6125 / NCTC 8237 / Type A).